A 281-amino-acid polypeptide reads, in one-letter code: Cardosin-F (281 aa).

One can recognise a Peptidase A1 domain in the interval 18 to 278; it reads YYGEIGIGTP…DYGNLLVGFA (261 aa). Residue Asp-36 is part of the active site. Cys-181 and Cys-185 are joined by a disulfide. The active site involves Asp-190. The N-linked (GlcNAc...) asparagine glycan is linked to Asn-213.

This sequence belongs to the peptidase A1 family. In terms of assembly, heterodimer of a light chain and a heavy chain. An intermediate form is produced first, and undergoes proteolytic processing to remove the internal plant-specific insert (PSI) and the propeptide. In terms of processing, N-glycosylated. Pistils.

The protein localises to the microsome membrane. Its subcellular location is the protein storage vacuole. The protein resides in the secreted. It localises to the cell wall. It is found in the extracellular space. The protein localises to the extracellular matrix. With respect to regulation, inhibited by pepstatin. Functionally, aspartic protease with a high preference for bonds between hydrophobic residues. This chain is Cardosin-F, found in Cynara cardunculus (Cardoon).